The following is an 874-amino-acid chain: Alanine--tRNA ligase (874 aa).

Zn(2+)-binding residues include histidine 562, histidine 566, cysteine 664, and histidine 668.

This sequence belongs to the class-II aminoacyl-tRNA synthetase family. The cofactor is Zn(2+).

The protein localises to the cytoplasm. The catalysed reaction is tRNA(Ala) + L-alanine + ATP = L-alanyl-tRNA(Ala) + AMP + diphosphate. In terms of biological role, catalyzes the attachment of alanine to tRNA(Ala) in a two-step reaction: alanine is first activated by ATP to form Ala-AMP and then transferred to the acceptor end of tRNA(Ala). Also edits incorrectly charged Ser-tRNA(Ala) and Gly-tRNA(Ala) via its editing domain. The sequence is that of Alanine--tRNA ligase from Shewanella sediminis (strain HAW-EB3).